Here is a 750-residue protein sequence, read N- to C-terminus: Photosystem I P700 chlorophyll a apoprotein A1 (750 aa).

Helical transmembrane passes span Val70 to Ala93, Leu156 to His179, Leu195 to Leu219, Ile291 to Tyr309, Trp346 to Tyr369, Leu385 to Val411, Ala433 to His455, and Phe531 to Leu549. [4Fe-4S] cluster contacts are provided by Cys573 and Cys582. Transmembrane regions (helical) follow at residues His589–Trp610 and Leu664–Phe686. His675 is a chlorophyll a' binding site. Chlorophyll a-binding residues include Met683 and Tyr691. Position 692 (Trp692) interacts with phylloquinone. A helical transmembrane segment spans residues Ala724–Ala744.

The protein belongs to the PsaA/PsaB family. In terms of assembly, the PsaA/B heterodimer binds the P700 chlorophyll special pair and subsequent electron acceptors. PSI consists of a core antenna complex that captures photons, and an electron transfer chain that converts photonic excitation into a charge separation. The eukaryotic PSI reaction center is composed of at least 11 subunits. P700 is a chlorophyll a/chlorophyll a' dimer, A0 is one or more chlorophyll a, A1 is one or both phylloquinones and FX is a shared 4Fe-4S iron-sulfur center. serves as cofactor.

It is found in the plastid. The protein resides in the chloroplast thylakoid membrane. The catalysed reaction is reduced [plastocyanin] + hnu + oxidized [2Fe-2S]-[ferredoxin] = oxidized [plastocyanin] + reduced [2Fe-2S]-[ferredoxin]. In terms of biological role, psaA and PsaB bind P700, the primary electron donor of photosystem I (PSI), as well as the electron acceptors A0, A1 and FX. PSI is a plastocyanin-ferredoxin oxidoreductase, converting photonic excitation into a charge separation, which transfers an electron from the donor P700 chlorophyll pair to the spectroscopically characterized acceptors A0, A1, FX, FA and FB in turn. Oxidized P700 is reduced on the lumenal side of the thylakoid membrane by plastocyanin. This Amborella trichopoda protein is Photosystem I P700 chlorophyll a apoprotein A1.